We begin with the raw amino-acid sequence, 494 residues long: Glycerol kinase (494 aa).

T13 lines the ADP pocket. ATP-binding residues include T13, T14, and S15. Residue T13 coordinates sn-glycerol 3-phosphate. R17 is an ADP binding site. Sn-glycerol 3-phosphate contacts are provided by R83, E84, Y135, and D244. Glycerol is bound by residues R83, E84, Y135, D244, and Q245. ADP is bound by residues T266 and G309. 4 residues coordinate ATP: T266, G309, Q313, and G410. Positions 410 and 414 each coordinate ADP.

It belongs to the FGGY kinase family.

It carries out the reaction glycerol + ATP = sn-glycerol 3-phosphate + ADP + H(+). Its pathway is polyol metabolism; glycerol degradation via glycerol kinase pathway; sn-glycerol 3-phosphate from glycerol: step 1/1. Inhibited by fructose 1,6-bisphosphate (FBP). Its function is as follows. Key enzyme in the regulation of glycerol uptake and metabolism. Catalyzes the phosphorylation of glycerol to yield sn-glycerol 3-phosphate. This Shewanella sp. (strain MR-4) protein is Glycerol kinase.